Reading from the N-terminus, the 325-residue chain is Olfactory receptor 10AC1 (325 aa).

Over 1 to 26 (MDSPSNATVPCGFLLQGFSEFPHLRP) the chain is Extracellular. Residue Asn6 is glycosylated (N-linked (GlcNAc...) asparagine). Residues 27 to 47 (VLFLLLLGVHLATLGGNLLIL) traverse the membrane as a helical segment. The Cytoplasmic segment spans residues 48–57 (VAVASMPSRQ). A helical membrane pass occupies residues 58 to 78 (PMLLFLCQLSAIELCYTLVVV). Topologically, residues 79-101 (PRSLVDLSTPGHRRGSPISFLSC) are extracellular. Residues 102–122 (AFQMQMFVALGGAECFLLAAM) form a helical membrane-spanning segment. The Cytoplasmic segment spans residues 123–147 (AYDRYVAICHPLRYAAVVTPGLCAR). A helical transmembrane segment spans residues 148 to 168 (LALACCLRGLAVSVGLTVAIF). Residues 169–171 (HLP) are Extracellular-facing. Residues 172–192 (FCGSRLLLHFFCDITALLHLA) form a helical membrane-spanning segment. Residues 193 to 200 (CTRSYADE) are Cytoplasmic-facing. Residues 201-221 (LPLLGACLVLLLLPSVLILAS) form a helical membrane-spanning segment. Topologically, residues 222–243 (YGAIAAALRRLRCPKGRGKAAS) are extracellular. Residues 244 to 264 (TCALHLAVTFLHYGCATFMYV) form a helical membrane-spanning segment. Residues 265 to 325 (RPRASYSPRL…QAPGGDLREL (61 aa)) lie on the Cytoplasmic side of the membrane.

The protein belongs to the G-protein coupled receptor 1 family.

Its subcellular location is the cell membrane. Odorant receptor. This Homo sapiens (Human) protein is Olfactory receptor 10AC1 (OR10AC1).